A 70-amino-acid chain; its full sequence is DNA-directed RNA polymerase subunit omega (70 aa).

Belongs to the RNA polymerase subunit omega family. The RNAP catalytic core consists of 2 alpha, 1 beta, 1 beta' and 1 omega subunit. When a sigma factor is associated with the core the holoenzyme is formed, which can initiate transcription.

The catalysed reaction is RNA(n) + a ribonucleoside 5'-triphosphate = RNA(n+1) + diphosphate. Promotes RNA polymerase assembly. Latches the N- and C-terminal regions of the beta' subunit thereby facilitating its interaction with the beta and alpha subunits. In Clostridium perfringens (strain ATCC 13124 / DSM 756 / JCM 1290 / NCIMB 6125 / NCTC 8237 / Type A), this protein is DNA-directed RNA polymerase subunit omega.